Reading from the N-terminus, the 224-residue chain is CRP-like cAMP-activated global transcriptional regulator (224 aa).

3',5'-cyclic AMP is bound by residues 64-70, 79-82, 89-90, 134-135, 142-143, and 178-188; these read GRENLLT, GELS, RT, TN, IF, and EEIAQLVGASR. The region spanning 144–217 is the HTH crp-type domain; the sequence is TDVPGRVAKQ…GKSVLISDSE (74 aa). The H-T-H motif DNA-binding region spans 177-196; sequence QEEIAQLVGASRETVNKALA.

In terms of assembly, homodimer.

In terms of biological role, global transcriptional regulator that complexes with cAMP and binds to specific DNA promoter sites, causing DNA-bending, to regulate transcription. cAMP improves binding to specific DNA sequences, probably by altering protein conformation. Activates expression of whiB1. The chain is CRP-like cAMP-activated global transcriptional regulator from Mycobacterium tuberculosis (strain CDC 1551 / Oshkosh).